The following is a 216-amino-acid chain: Octanoyltransferase (216 aa).

Residues Ala-33–Ala-212 form the BPL/LPL catalytic domain. Substrate-binding positions include Arg-72–His-79, Ser-139–Gly-141, and Gly-152–Ala-154. The Acyl-thioester intermediate role is filled by Cys-170.

It belongs to the LipB family.

The protein localises to the cytoplasm. It carries out the reaction octanoyl-[ACP] + L-lysyl-[protein] = N(6)-octanoyl-L-lysyl-[protein] + holo-[ACP] + H(+). It participates in protein modification; protein lipoylation via endogenous pathway; protein N(6)-(lipoyl)lysine from octanoyl-[acyl-carrier-protein]: step 1/2. Functionally, catalyzes the transfer of endogenously produced octanoic acid from octanoyl-acyl-carrier-protein onto the lipoyl domains of lipoate-dependent enzymes. Lipoyl-ACP can also act as a substrate although octanoyl-ACP is likely to be the physiological substrate. The chain is Octanoyltransferase from Saccharophagus degradans (strain 2-40 / ATCC 43961 / DSM 17024).